Reading from the N-terminus, the 99-residue chain is Cobalt transport protein CbiN (99 aa).

Transmembrane regions (helical) follow at residues 6 to 26 (VLMI…YSGL) and 68 to 88 (SLLF…FFGY).

This sequence belongs to the CbiN family. As to quaternary structure, forms an energy-coupling factor (ECF) transporter complex composed of an ATP-binding protein (A component, CbiO), a transmembrane protein (T component, CbiQ) and 2 possible substrate-capture proteins (S components, CbiM and CbiN) of unknown stoichimetry.

Its subcellular location is the cell membrane. The protein operates within cofactor biosynthesis; adenosylcobalamin biosynthesis. Functionally, part of the energy-coupling factor (ECF) transporter complex CbiMNOQ involved in cobalt import. The sequence is that of Cobalt transport protein CbiN from Methanococcus vannielii (strain ATCC 35089 / DSM 1224 / JCM 13029 / OCM 148 / SB).